A 581-amino-acid chain; its full sequence is Arginine--tRNA ligase (581 aa).

Residues 126–136 carry the 'HIGH' region motif; that stretch reads PNLAKEMHVGH.

The protein belongs to the class-I aminoacyl-tRNA synthetase family. As to quaternary structure, monomer.

It localises to the cytoplasm. The catalysed reaction is tRNA(Arg) + L-arginine + ATP = L-arginyl-tRNA(Arg) + AMP + diphosphate. In Shewanella piezotolerans (strain WP3 / JCM 13877), this protein is Arginine--tRNA ligase.